Here is a 365-residue protein sequence, read N- to C-terminus: Putative glutamate--cysteine ligase 2-3 (365 aa).

This sequence belongs to the glutamate--cysteine ligase type 2 family. YbdK subfamily.

The catalysed reaction is L-cysteine + L-glutamate + ATP = gamma-L-glutamyl-L-cysteine + ADP + phosphate + H(+). In terms of biological role, ATP-dependent carboxylate-amine ligase which exhibits weak glutamate--cysteine ligase activity. In Mycolicibacterium smegmatis (strain ATCC 700084 / mc(2)155) (Mycobacterium smegmatis), this protein is Putative glutamate--cysteine ligase 2-3.